Here is a 766-residue protein sequence, read N- to C-terminus: Single-minded homolog 1 (766 aa).

One can recognise a bHLH domain in the interval 1–53; it reads MKEKSKNAARTRREKENSEFYELAKLLPLPSAITSQLDKASIIRLTTSYLKMR. 2 PAS domains span residues 77 to 147 and 218 to 288; these read GREL…QPYH and PPSA…LVKG. One can recognise a PAC domain in the interval 292–335; it reads TKYYRFLAKHGGWVWVQSYATIVHNSRSSRPHCIVSVNYVLTDT. Residues 336 to 766 enclose the Single-minded C-terminal domain; that stretch reads EYKGLQLSLD…GTSVIITNGS (431 aa). Residues 353–365 show a composition bias toward polar residues; that stretch reads AFSYTSSSTPTMT. 3 disordered regions span residues 353 to 431, 528 to 563, and 642 to 662; these read AFSY…SQHD, WDED…EPSK, and SPRE…SSPN. Residues 368-387 carry the Nuclear localization signal motif; it reads RKGAKSRLSSSKSKSRTSPY. Residues 373–385 show a composition bias toward low complexity; that stretch reads SRLSSSKSKSRTS. The span at 394 to 404 shows a compositional bias: basic and acidic residues; that stretch reads HTERSESDHDS. Residues 649-662 are compositionally biased toward polar residues; it reads DNSPTALSRISSPN.

Efficient DNA binding requires dimerization with another bHLH protein. Heterodimer; forms a heterodimer with ARNT, ARNT2.

The protein resides in the nucleus. Its function is as follows. Transcriptional factor that may have pleiotropic effects during embryogenesis and in the adult. In Pan troglodytes (Chimpanzee), this protein is Single-minded homolog 1 (SIM1).